Consider the following 206-residue polypeptide: GDT1-like protein sll0615 (206 aa).

5 helical membrane passes run 36-56, 58-78, 114-134, 151-171, and 185-205; these read WVLV…VLMG, IFTF…FLIF, IVPR…VAEW, AWGV…IAVM, and VTLI…WTKI.

The protein belongs to the GDT1 family.

The protein resides in the cell membrane. This Synechocystis sp. (strain ATCC 27184 / PCC 6803 / Kazusa) protein is GDT1-like protein sll0615.